A 367-amino-acid polypeptide reads, in one-letter code: Porin Omp2a (367 aa).

The first 22 residues, 1–22, serve as a signal peptide directing secretion; that stretch reads MNIKSLLLGSAAALVAASGAQA.

It belongs to the alphaproteobacteria porin family. Monomer.

Its subcellular location is the cell outer membrane. Forms passive diffusion pores that allow small molecular weight hydrophilic materials across the outer membrane. This Brucella melitensis biotype 1 (strain ATCC 23456 / CCUG 17765 / NCTC 10094 / 16M) protein is Porin Omp2a (omp2a).